The following is a 186-amino-acid chain: MACGATLKRSMEFEALMSPQSPKRRRCAPLPGSPATPSPQRCAIRPEMQQGQQQPLSQLGGDRRLTPEQILQNIKQEYTRYQRRRQLEGAFNQCEAGALNEVQASCSSLTAPSSPGSLVKKDQPTFSLRQVGILCERLLKDHEDKIREEYEQILNIKLAEQYESFVKFTHDQIMRRYGARPASYVS.

A disordered region spans residues 14–65 (EALMSPQSPKRRRCAPLPGSPATPSPQRCAIRPEMQQGQQQPLSQLGGDRRL). Over residues 49-60 (QQGQQQPLSQLG) the composition is skewed to low complexity. The SYVS motif motif lies at 183–186 (SYVS).

It belongs to the akirin family.

It is found in the nucleus. Functionally, molecular adapter that acts as a bridge between proteins, and which is involved skeletal muscle development. Functions as a signal transducer for MSTN during skeletal muscle regeneration and myogenesis. The polypeptide is Akirin-1A (akirin1-a) (Xenopus laevis (African clawed frog)).